We begin with the raw amino-acid sequence, 70 residues long: Large ribosomal subunit protein bL31 (70 aa).

Residues Cys-16, Cys-18, Cys-37, and Cys-40 each contribute to the Zn(2+) site.

Belongs to the bacterial ribosomal protein bL31 family. Type A subfamily. Part of the 50S ribosomal subunit. Zn(2+) is required as a cofactor.

In terms of biological role, binds the 23S rRNA. In Shewanella amazonensis (strain ATCC BAA-1098 / SB2B), this protein is Large ribosomal subunit protein bL31.